The chain runs to 376 residues: Arginine/serine-rich coiled-coil protein 2 (376 aa).

The segment at 1-171 is disordered; the sequence is MIRTNFLLKQ…PSPPPFRGRN (171 aa). Residues 13–52 show a composition bias toward basic and acidic residues; that stretch reads RHESKDKSSKRHKSEEHNDKEHSSDKGRERLNSSENGEDR. Ser-45 is subject to Phosphoserine. Positions 53–155 are enriched in basic residues; the sequence is HKRKERKSSR…KRIEKPRRFS (103 aa). Positions 171-214 form a coiled coil; the sequence is NTAMDAQEALARRLERAKKLQEQREKEMVEKQKQQEMAAAAAAT. Lys-317 participates in a covalent cross-link: Glycyl lysine isopeptide (Lys-Gly) (interchain with G-Cter in SUMO1); alternate. Lys-317 is covalently cross-linked (Glycyl lysine isopeptide (Lys-Gly) (interchain with G-Cter in SUMO2); alternate). Ser-318 is modified (phosphoserine).

The protein belongs to the RSRC2 family.

In Rattus norvegicus (Rat), this protein is Arginine/serine-rich coiled-coil protein 2 (Rsrc2).